We begin with the raw amino-acid sequence, 100 residues long: Urease subunit gamma (100 aa).

Belongs to the urease gamma subunit family. Heterotrimer of UreA (gamma), UreB (beta) and UreC (alpha) subunits. Three heterotrimers associate to form the active enzyme.

The protein localises to the cytoplasm. It catalyses the reaction urea + 2 H2O + H(+) = hydrogencarbonate + 2 NH4(+). It participates in nitrogen metabolism; urea degradation; CO(2) and NH(3) from urea (urease route): step 1/1. The chain is Urease subunit gamma from Enterobacter sp. (strain 638).